A 510-amino-acid polypeptide reads, in one-letter code: 3,4-dihydroxyphenylacetaldehyde synthase (510 aa).

The active site involves Asn192. At Lys303 the chain carries N6-(pyridoxal phosphate)lysine.

This sequence belongs to the group II decarboxylase family. Pyridoxal 5'-phosphate is required as a cofactor.

It carries out the reaction L-dopa + O2 + H2O + H(+) = 3,4-dihydroxyphenylacetaldehyde + H2O2 + NH4(+) + CO2. Its function is as follows. Catalyzes the decarboxylation-oxidative deamination of L-3,4-dihydroxyphenylalanine (L-DOPA) to 3,4-dihydroxylphenylacetaldehyde (DHPAA). Involved in cuticle development. Probably responsible for the protein cross-linking during the development of flexible cuticles. The protein is 3,4-dihydroxyphenylacetaldehyde synthase (amd) of Drosophila melanogaster (Fruit fly).